Here is a 381-residue protein sequence, read N- to C-terminus: Metacaspase-8 (381 aa).

Catalysis depends on residues H86 and C140. C140 is modified (S-nitrosocysteine).

Belongs to the peptidase C14B family. Proteolytically processed; by an autocatalytic mechanism.

In terms of biological role, cysteine protease that cleaves specifically after arginine residues. Does not cleave caspase-specific substrates. May be involved in the modulation of programmed cell death activated by oxidative stress. The sequence is that of Metacaspase-8 (AMC8) from Arabidopsis thaliana (Mouse-ear cress).